Reading from the N-terminus, the 640-residue chain is Biosynthetic arginine decarboxylase (640 aa).

Residue K105 is modified to N6-(pyridoxal phosphate)lysine. 290-300 (FDVGGGLAIDY) is a substrate binding site.

Belongs to the Orn/Lys/Arg decarboxylase class-II family. SpeA subfamily. The cofactor is Mg(2+). It depends on pyridoxal 5'-phosphate as a cofactor.

It carries out the reaction L-arginine + H(+) = agmatine + CO2. Catalyzes the biosynthesis of agmatine from arginine. The sequence is that of Biosynthetic arginine decarboxylase from Vibrio vulnificus (strain CMCP6).